Reading from the N-terminus, the 457-residue chain is Chromosomal replication initiator protein DnaA (457 aa).

Positions 1 to 75 are domain I, interacts with DnaA modulators; it reads MDAQLNNLWE…ALKIVTSRKF (75 aa). Residues 75–118 form a domain II region; the sequence is FKIEFYLESDLEEEKENEEKQKEEKKENTNDVDGSIVVSDEMSA. The segment at 119–335 is domain III, AAA+ region; that stretch reads TLNPKYTFQS…GALIRIIAYS (217 aa). ATP is bound by residues Gly-163, Gly-165, Lys-166, and Thr-167. The domain IV, binds dsDNA stretch occupies residues 336-457; it reads SLTNRDVSVD…NDITKKLTQK (122 aa).

This sequence belongs to the DnaA family. Oligomerizes as a right-handed, spiral filament on DNA at oriC.

It localises to the cytoplasm. Functionally, plays an essential role in the initiation and regulation of chromosomal replication. ATP-DnaA binds to the origin of replication (oriC) to initiate formation of the DNA replication initiation complex once per cell cycle. Binds the DnaA box (a 9 base pair repeat at the origin) and separates the double-stranded (ds)DNA. Forms a right-handed helical filament on oriC DNA; dsDNA binds to the exterior of the filament while single-stranded (ss)DNA is stabiized in the filament's interior. The ATP-DnaA-oriC complex binds and stabilizes one strand of the AT-rich DNA unwinding element (DUE), permitting loading of DNA polymerase. After initiation quickly degrades to an ADP-DnaA complex that is not apt for DNA replication. Binds acidic phospholipids. The polypeptide is Chromosomal replication initiator protein DnaA (Clostridium perfringens (strain ATCC 13124 / DSM 756 / JCM 1290 / NCIMB 6125 / NCTC 8237 / Type A)).